The primary structure comprises 133 residues: Late embryogenesis abundant protein B19.3 (133 aa).

A disordered region spans residues 1–133 (MASGQQERSE…IDESKFKTKS (133 aa)). Composition is skewed to basic and acidic residues over residues 7-19 (ERSELDRMAREGE), 32-102 (EAQE…EMGR), and 113-133 (GGERAAREGIDIDESKFKTKS). Repeat copies occupy residues 24-43 (GGTGGKTLEAQEHLAEGRSR), 44-63 (GGQTRKDQLGEEGYREMGHK), and 64-83 (GGETRKEQLGEEGYREMGHK). The 3 X 20 AA tandem repeats stretch occupies residues 24-83 (GGTGGKTLEAQEHLAEGRSRGGQTRKDQLGEEGYREMGHKGGETRKEQLGEEGYREMGHK).

This sequence belongs to the small hydrophilic plant seed protein family.

Its function is as follows. Lea proteins are late embryonic proteins abundant in higher plant seed embryos. The sequence is that of Late embryogenesis abundant protein B19.3 (B19.3) from Hordeum vulgare (Barley).